We begin with the raw amino-acid sequence, 1241 residues long: ATP-dependent helicase/nuclease subunit A (1241 aa).

The UvrD-like helicase ATP-binding domain occupies 12–485; the sequence is SQWTDDQWKA…IDLAKNFRSR (474 aa). 33-40 serves as a coordination point for ATP; the sequence is AAAGSGKT. Positions 505-805 constitute a UvrD-like helicase C-terminal domain; that stretch reads GEIDYDADAE…RIMTIHKSKG (301 aa).

Belongs to the helicase family. AddA subfamily. Heterodimer of AddA and AddB/RexB. Mg(2+) is required as a cofactor.

The enzyme catalyses Couples ATP hydrolysis with the unwinding of duplex DNA by translocating in the 3'-5' direction.. The catalysed reaction is ATP + H2O = ADP + phosphate + H(+). Functionally, the heterodimer acts as both an ATP-dependent DNA helicase and an ATP-dependent, dual-direction single-stranded exonuclease. Recognizes the chi site generating a DNA molecule suitable for the initiation of homologous recombination. The AddA nuclease domain is required for chi fragment generation; this subunit has the helicase and 3' -&gt; 5' nuclease activities. The sequence is that of ATP-dependent helicase/nuclease subunit A from Bacillus cereus (strain ATCC 14579 / DSM 31 / CCUG 7414 / JCM 2152 / NBRC 15305 / NCIMB 9373 / NCTC 2599 / NRRL B-3711).